Consider the following 279-residue polypeptide: Putative hydroxypyruvate isomerase (279 aa).

Active-site proton donor/acceptor residues include Glu-155 and Glu-256. Residues 260 to 279 (GDDPSAQSFSWLPAGARAAR) form a disordered region.

Belongs to the hyi family.

The catalysed reaction is 3-hydroxypyruvate = 2-hydroxy-3-oxopropanoate. In terms of biological role, catalyzes the reversible isomerization between hydroxypyruvate and 2-hydroxy-3-oxopropanoate (also termed tartronate semialdehyde). This chain is Putative hydroxypyruvate isomerase, found in Streptomyces coelicolor (strain ATCC BAA-471 / A3(2) / M145).